The sequence spans 406 residues: Tyrosine--tRNA ligase (406 aa).

Tyr35 lines the L-tyrosine pocket. The 'HIGH' region signature appears at 40-49 (PTADSLHVGH). Residues Tyr168 and Gln172 each coordinate L-tyrosine. Positions 228 to 232 (KMGKT) match the 'KMSKS' region motif. Lys231 serves as a coordination point for ATP. Residues 340-404 (SELLDILVEA…RGKKNYNKIV (65 aa)) form the S4 RNA-binding domain.

This sequence belongs to the class-I aminoacyl-tRNA synthetase family. TyrS type 1 subfamily. As to quaternary structure, homodimer.

The protein resides in the cytoplasm. The catalysed reaction is tRNA(Tyr) + L-tyrosine + ATP = L-tyrosyl-tRNA(Tyr) + AMP + diphosphate + H(+). Its function is as follows. Catalyzes the attachment of tyrosine to tRNA(Tyr) in a two-step reaction: tyrosine is first activated by ATP to form Tyr-AMP and then transferred to the acceptor end of tRNA(Tyr). The chain is Tyrosine--tRNA ligase from Clostridium perfringens (strain SM101 / Type A).